Reading from the N-terminus, the 239-residue chain is Putative glutamine amidotransferase-like protein YfeJ (239 aa).

Positions 1–200 (MRVHFVVHES…IQHSQQELAD (200 aa)) constitute a Glutamine amidotransferase type-1 domain.

The chain is Putative glutamine amidotransferase-like protein YfeJ (yfeJ) from Salmonella typhimurium (strain LT2 / SGSC1412 / ATCC 700720).